The following is a 1213-amino-acid chain: Hybrid signal transduction histidine kinase K (1213 aa).

Disordered stretches follow at residues 1 to 37, 98 to 189, 279 to 392, and 495 to 565; these read MIEL…NKTN, NNNY…SSSS, NKNV…IPFR, and TTEQ…NYNN. 6 stretches are compositionally biased toward low complexity: residues 98 to 162, 171 to 189, 279 to 331, 339 to 371, 498 to 511, and 522 to 565; these read NNNY…QKDQ, SLSS…SSSS, NKNV…NSGA, NNNN…SNNN, QQQQ…QQQQ, and QRQQ…NYNN. Transmembrane regions (helical) follow at residues 600–618, 628–648, 652–672, 676–696, 729–749, and 768–788; these read IIFN…GSNI, LIIG…IFFW, INKP…SLVI, TGSI…ALTI, IQWS…NLYG, and IIDV…QYFI. The Histidine kinase domain maps to 822-1052; the sequence is TMSHEIRTPL…TFWFILPLEE (231 aa). His-825 carries the phosphohistidine; by autocatalysis modification. One can recognise a Response regulatory domain in the interval 1076 to 1199; that stretch reads KVLIAEDNII…QLRSAIEMAI (124 aa). A 4-aspartylphosphate modification is found at Asp-1125.

Post-translationally, activation probably requires transfer of a phosphate group between a histidine in the kinase core (transmitter) domain and an aspartate of the receiver domain.

It localises to the nucleus membrane. It carries out the reaction ATP + protein L-histidine = ADP + protein N-phospho-L-histidine.. Involved in a signal transduction pathway that regulates morphogenesis and controls entry into the culmination stage. May act via the regA pathway, being activated by a morphogenesis-stimulated ligand, reducing phosphodiesterase regA levels and allowing cAMP level to rise to promote the culmination stage. This protein probably undergoes an ATP-dependent autophosphorylation at a conserved histidine residue in the kinase core, and a phosphoryl group is then transferred to a conserved aspartate residue in the receiver domain. This is Hybrid signal transduction histidine kinase K (dhkK) from Dictyostelium discoideum (Social amoeba).